Reading from the N-terminus, the 212-residue chain is Urease accessory protein UreG (212 aa).

A GTP-binding site is contributed by 15–22 (GPVGSGKT).

This sequence belongs to the SIMIBI class G3E GTPase family. UreG subfamily. Homodimer. UreD, UreF and UreG form a complex that acts as a GTP-hydrolysis-dependent molecular chaperone, activating the urease apoprotein by helping to assemble the nickel containing metallocenter of UreC. The UreE protein probably delivers the nickel.

The protein localises to the cytoplasm. Its function is as follows. Facilitates the functional incorporation of the urease nickel metallocenter. This process requires GTP hydrolysis, probably effectuated by UreG. The protein is Urease accessory protein UreG of Opitutus terrae (strain DSM 11246 / JCM 15787 / PB90-1).